Reading from the N-terminus, the 439-residue chain is U1 small nuclear ribonucleoprotein 70 kDa (439 aa).

Thr-2 is modified (N-acetylthreonine). Residues 48–79 form a disordered region; sequence FEDPRDAPPPTRAETREERMERKRREKIERRQ. A compositionally biased stretch (basic and acidic residues) spans 60 to 79; sequence AETREERMERKRREKIERRQ. A required for interaction with U1 RNA region spans residues 92–202; that stretch reads HNDPNAQGDA…GGGLGGTRRG (111 aa). In terms of domain architecture, RRM spans 103 to 181; the sequence is KTLFVARVNY…RRVLVDVERG (79 aa). Position 118 is an N6-acetyllysine (Lys-118). Tyr-126 is modified (phosphotyrosine). The interval 187–439 is disordered; sequence WRPRRLGGGL…NGYLMEAAPE (253 aa). Positions 192-201 are enriched in gly residues; it reads LGGGLGGTRR. Residues 207-254 are compositionally biased toward basic and acidic residues; sequence NIRHSGRDDTSRYDERPGPSPLPHRDRDRDRERERRERSRERDKERER. Phosphoserine is present on residues Ser-226 and Ser-268. Basic residues predominate over residues 255–268; the sequence is RRSRSRDRRRRSRS. Composition is skewed to basic and acidic residues over residues 269–286 and 294–310; these read RDKE…DKDR and RSRE…EELR. Phosphoserine is present on Ser-323. Residues 346-394 show a composition bias toward basic and acidic residues; it reads PEEKGRDRDRDRRRSHRSERERRRDRDRDRDREHKRGERGGDRGRDEAR. A Glycyl lysine isopeptide (Lys-Gly) (interchain with G-Cter in SUMO2) cross-link involves residue Lys-349. A compositionally biased stretch (gly residues) spans 395–410; sequence GGGGGGQDNGLEGLGN.

In terms of assembly, component of the U1 snRNP. The U1 snRNP is composed of the U1 snRNA and the 7 core Sm proteins SNRPB, SNRPD1, SNRPD2, SNRPD3, SNRPE, SNRPF and SNRPG that assemble in a heptameric protein ring on the Sm site of the small nuclear RNA to form the core snRNP, and at least three U1 snRNP-specific proteins SNRNP70/U1-70K, SNRPA/U1-A and SNRPC/U1-C. Interacts with SCNM1. Found in a pre-mRNA splicing complex with SFRS4, SFRS5, SNRNP70, SNRPA1, SRRM1 and SRRM2. Found in a pre-mRNA exonic splicing enhancer (ESE) complex with SNRNP70, SNRPA1, SRRM1 and TRA2B/SFRS10. Interacts with dephosphorylated SFRS13A and SFPQ. Interacts with NUDT21/CPSF5, CPSF6, SCAF11, and ZRANB2. Interacts with GEMIN5. Interacts with FUS. Post-translationally, extensively phosphorylated on serine residues in the C-terminal region.

Its subcellular location is the nucleus speckle. It is found in the nucleus. It localises to the nucleoplasm. In terms of biological role, component of the spliceosomal U1 snRNP, which is essential for recognition of the pre-mRNA 5' splice-site and the subsequent assembly of the spliceosome. SNRNP70 binds to the loop I region of U1-snRNA. The protein is U1 small nuclear ribonucleoprotein 70 kDa (SNRNP70) of Bos taurus (Bovine).